We begin with the raw amino-acid sequence, 412 residues long: FAD-dependent monooxygenase nscC (412 aa).

Residues 1-21 form the signal peptide; the sequence is MGKQQETILIIGAGISGLATS. FAD contacts are provided by glutamate 35 and alanine 46. N-linked (GlcNAc...) asparagine glycosylation occurs at asparagine 92. Arginine 119 contacts FAD. Residues asparagine 170 and asparagine 231 are each glycosylated (N-linked (GlcNAc...) asparagine). The FAD site is built by aspartate 326 and glycine 339.

It belongs to the paxM FAD-dependent monooxygenase family. It depends on FAD as a cofactor.

It participates in secondary metabolite biosynthesis. In terms of biological role, FAD-dependent monooxygenase; part of the gene cluster that mediates the biosynthesis of neosartoricin B, a prenylated anthracenone that probably exhibits T-cell antiproliferative activity, suggestive of a physiological role as an immunosuppressive agent. The non-reducing polyketide synthase nscA probably synthesizes and cyclizes the decaketide backbone. The hydrolase nscB then mediates the product release through hydrolysis followed by spontaneous decarboxylation. The prenyltransferase nscD catalyzes the addition of the dimethylallyl group to the aromatic C5. The FAD-dependent monooxygenase nscC is then responsible for the stereospecific hydroxylation at C2. Neosartoricin B can be converted into two additional compounds neosartoricins C and D. Neosartoricin C is a spirocyclic compound that is cyclized through the attack of C3 hydroxyl on C14, followed by dehydration. On the other hand, neosartoricin D is a further cyclized compound in which attack of C2 on C14 in neosartoricin C results in the formation of the acetal-containing dioxabicyclo-octanone ring. Both of these compounds are novel and possibly represent related metabolites of the gene cluster. This chain is FAD-dependent monooxygenase nscC, found in Trichophyton tonsurans (strain CBS 112818) (Scalp ringworm fungus).